The chain runs to 228 residues: Cytochrome c oxidase subunit 2 (228 aa).

Residues 1–26 (MSTWANLGLQDSASPLMEQLIFFHDH) lie on the Mitochondrial intermembrane side of the membrane. A helical transmembrane segment spans residues 27-48 (ALLILVMITVLVGYLMFMLFFN). At 49 to 62 (NYVNRFLLHGQLIE) the chain is on the mitochondrial matrix side. The helical transmembrane segment at 63 to 82 (MIWTILPAIILLFIALPSLR) threads the bilayer. At 83 to 228 (LLYLLDEINE…FIKWISSNNS (146 aa)) the chain is on the mitochondrial intermembrane side. Residues H161, C196, E198, C200, H204, and M207 each coordinate Cu cation. E198 contacts Mg(2+).

Belongs to the cytochrome c oxidase subunit 2 family. As to quaternary structure, component of the cytochrome c oxidase (complex IV, CIV), a multisubunit enzyme composed of a catalytic core of 3 subunits and several supernumerary subunits. The complex exists as a monomer or a dimer and forms supercomplexes (SCs) in the inner mitochondrial membrane with ubiquinol-cytochrome c oxidoreductase (cytochrome b-c1 complex, complex III, CIII). Cu cation is required as a cofactor.

The protein resides in the mitochondrion inner membrane. The enzyme catalyses 4 Fe(II)-[cytochrome c] + O2 + 8 H(+)(in) = 4 Fe(III)-[cytochrome c] + 2 H2O + 4 H(+)(out). Its function is as follows. Component of the cytochrome c oxidase, the last enzyme in the mitochondrial electron transport chain which drives oxidative phosphorylation. The respiratory chain contains 3 multisubunit complexes succinate dehydrogenase (complex II, CII), ubiquinol-cytochrome c oxidoreductase (cytochrome b-c1 complex, complex III, CIII) and cytochrome c oxidase (complex IV, CIV), that cooperate to transfer electrons derived from NADH and succinate to molecular oxygen, creating an electrochemical gradient over the inner membrane that drives transmembrane transport and the ATP synthase. Cytochrome c oxidase is the component of the respiratory chain that catalyzes the reduction of oxygen to water. Electrons originating from reduced cytochrome c in the intermembrane space (IMS) are transferred via the dinuclear copper A center (CU(A)) of subunit 2 and heme A of subunit 1 to the active site in subunit 1, a binuclear center (BNC) formed by heme A3 and copper B (CU(B)). The BNC reduces molecular oxygen to 2 water molecules using 4 electrons from cytochrome c in the IMS and 4 protons from the mitochondrial matrix. The sequence is that of Cytochrome c oxidase subunit 2 (mt:CoII) from Drosophila simulans (Fruit fly).